A 95-amino-acid chain; its full sequence is Trypomastigote decay-accelerating factor (95 aa).

Belongs to the receptors of complement activation (RCA) family.

Interferes with the efficient assembly of the host C3 convertase. Could protect parasites from complement-mediated lysis by sera from a number of different species. This Trypanosoma cruzi protein is Trypomastigote decay-accelerating factor.